The primary structure comprises 502 residues: High affinity nitrate transporter 2.5 (502 aa).

The next 12 helical transmembrane spans lie at 51–71 (WFQF…LPVI), 87–107 (IASV…CDLF), 111–131 (LASA…AGIK), 133–153 (PIGF…FVST), 172–192 (IAAG…PIVF), 208–228 (IAFF…LLFG), 264–284 (WITA…DNII), 300–320 (GIIA…GGIF), 334–354 (LWAW…LGQI), 361–381 (IIVM…TFGV), 393–413 (VSGM…LIFF), and 423–443 (GITL…LIYF). The disordered stretch occupies residues 477-502 (LHIGSQKFAETSISERGRATTTHPQT).

The protein belongs to the major facilitator superfamily. Nitrate/nitrite porter (TC 2.A.1.8) family. Oligomeric molecular complex with NRT3.1. As to expression, expressed in roots, shoots and seeds. Expressed in leaves. Expressed in root hair zone of the primary root and the lateral roots, but not in the lateral root tip or in older parts of the roots. Detected mainly in the epidermis and the cortex. Expressed in shoots only in higher-order veins.

Its subcellular location is the cell membrane. In terms of biological role, nitrate transporter involved in the constitutive high-affinity transport system (cHATS) under long-term N starvation conditions. Predominantly expressed in roots of nitrate-deprived plants as a 150 kDa molecular complex with NRT3.1 representing the major contributor to cHATS influx. The principal role of this cHATS is to enable roots previously deprived of nitrate to absorb this ion and initiate induction of nitrate-inducible genes. Not involved in transfer of nitrate from roots to shoots. Contributes to phloem loading of nitrate in shoots during N starvation, but not required for growth and nitrate uptake in young plants. Required for the nitrate uptake-independent plant growth promotion and lateral root response to the rhizospheric Phyllobacterium. Might be involved in the transfer of nitrate from stored pools to cytoplasm. This chain is High affinity nitrate transporter 2.5 (NRT2.5), found in Arabidopsis thaliana (Mouse-ear cress).